The primary structure comprises 360 residues: Glutamate--cysteine ligase (360 aa).

Belongs to the glutamate--cysteine ligase type 2 family. YbdK subfamily.

The enzyme catalyses L-cysteine + L-glutamate + ATP = gamma-L-glutamyl-L-cysteine + ADP + phosphate + H(+). In terms of biological role, catalyzes the synthesis of gamma-glutamylcysteine (gamma-GC), the main low-molecular-weight thiol compound instead of glutathione in halophilic archaea. The chain is Glutamate--cysteine ligase from Halobacterium salinarum (strain ATCC 29341 / DSM 671 / R1).